Consider the following 222-residue polypeptide: Glutathione S-transferase A4 (222 aa).

Methionine 1 carries the post-translational modification N-acetylmethionine. The 81-residue stretch at 3-83 (TKPKLHYPNG…YIADKHHLFG (81 aa)) folds into the GST N-terminal domain. Glutathione is bound by residues tyrosine 9, 54–55 (QV), and 67–68 (QT). In terms of domain architecture, GST C-terminal spans 85 to 208 (DLKERTLIDM…EPGSKKKPPP (124 aa)).

It belongs to the GST superfamily. Alpha family. As to quaternary structure, homodimer.

It localises to the cytoplasm. The catalysed reaction is RX + glutathione = an S-substituted glutathione + a halide anion + H(+). Functionally, conjugation of reduced glutathione to a wide number of exogenous and endogenous hydrophobic electrophiles. The protein is Glutathione S-transferase A4 (GSTA4) of Bos taurus (Bovine).